A 111-amino-acid chain; its full sequence is Large ribosomal subunit protein bL20c (111 aa).

Belongs to the bacterial ribosomal protein bL20 family.

The protein resides in the plastid. It is found in the chloroplast. Its function is as follows. Binds directly to 23S ribosomal RNA and is necessary for the in vitro assembly process of the 50S ribosomal subunit. It is not involved in the protein synthesizing functions of that subunit. The chain is Large ribosomal subunit protein bL20c from Ostreococcus tauri.